Consider the following 642-residue polypeptide: Threonine--tRNA ligase (642 aa).

The TGS domain occupies 1–61 (MPVITLPDGS…ETDAELSIIT (61 aa)). The segment at 243–534 (DHRKIGKQLD…LIEEYAGRFP (292 aa)) is catalytic. Cys-334, His-385, and His-511 together coordinate Zn(2+).

It belongs to the class-II aminoacyl-tRNA synthetase family. In terms of assembly, homodimer. Zn(2+) serves as cofactor.

The protein localises to the cytoplasm. It catalyses the reaction tRNA(Thr) + L-threonine + ATP = L-threonyl-tRNA(Thr) + AMP + diphosphate + H(+). Its function is as follows. Catalyzes the attachment of threonine to tRNA(Thr) in a two-step reaction: L-threonine is first activated by ATP to form Thr-AMP and then transferred to the acceptor end of tRNA(Thr). Also edits incorrectly charged L-seryl-tRNA(Thr). This is Threonine--tRNA ligase from Shewanella baltica (strain OS155 / ATCC BAA-1091).